Reading from the N-terminus, the 1065-residue chain is Leucine-rich repeats and immunoglobulin-like domains protein 2 (1065 aa).

A signal peptide spans 1–40 (MAPAPLGVPEEQLLGCRSRVLSRLLFIAQTALLLLPAAGA). An LRRNT domain is found at 41–75 (GLCPAPCSCRIPLLDCSRRKLPAPSWRALSGLLPP). At 41–807 (GLCPAPCSCR…HEDDGWTTVG (767 aa)) the chain is on the extracellular side. LRR repeat units follow at residues 76–97 (DTAI…LESQ), 98–119 (TLQE…GEPT), 121–142 (NITL…ALQF), 145–166 (ALES…SFPR), 168–189 (QLKY…CFDN), 193–214 (SLLV…IFKL), 216–237 (HLQF…TFQG), 240–261 (SLRS…AFFG), 264–285 (NMEE…WLYG), 288–309 (MLQQ…AWEF), 312–333 (RLSE…AFVG), 336–357 (LLER…VFRF), 360–382 (NLQT…SEAF), 387–408 (SLTK…AFIG), and 411–432 (SLEH…AFSQ). Asn-91 carries N-linked (GlcNAc...) asparagine glycosylation. Residue Asn-121 is glycosylated (N-linked (GlcNAc...) asparagine). N-linked (GlcNAc...) asparagine glycosylation is found at Asn-173 and Asn-189. An N-linked (GlcNAc...) asparagine glycan is attached at Asn-274. N-linked (GlcNAc...) asparagine glycosylation is found at Asn-441, Asn-468, Asn-514, Asn-571, and Asn-589. Positions 443-494 (SSLLCDCHLKWLLQWLVDNNFQHSVNVSCAHPEWLAGQSILNVDLKDFVCDD) constitute an LRRCT domain. Ig-like C2-type domains follow at residues 498 to 597 (PQIR…AKLT), 602 to 691 (PSFL…ASLT), and 696 to 785 (PSFI…NVIS). The cysteines at positions 519 and 580 are disulfide-linked. Residues Cys-623 and Cys-675 are joined by a disulfide bond. N-linked (GlcNAc...) asparagine glycosylation is found at Asn-687 and Asn-728. A disulfide bridge links Cys-717 with Cys-766. The chain crosses the membrane as a helical span at residues 808-828 (IVIIVVVCCVVGTSLIWVIVI). Residues 829–1065 (YHMRRKNEDY…RNIQDGSEGT (237 aa)) are Cytoplasmic-facing. Tyr-906 is modified (phosphotyrosine). Disordered regions lie at residues 963 to 990 (SANR…QMSG) and 1003 to 1040 (ELGL…ASSM). Over residues 974-983 (NHERISEKKL) the composition is skewed to basic and acidic residues. The span at 1013–1024 (QQPVHESPQLHQ) shows a compositional bias: polar residues.

As to expression, detected in all tissues analyzed.

Its subcellular location is the cell membrane. The protein localises to the cytoplasm. In Homo sapiens (Human), this protein is Leucine-rich repeats and immunoglobulin-like domains protein 2 (LRIG2).